The primary structure comprises 365 residues: Prostaglandin E2 receptor EP3 subtype (365 aa).

Over 1-30 the chain is Extracellular; sequence MAGVWAPEHSVEAHSNQSSAADGCGSVSVA. Residue Asn16 is glycosylated (N-linked (GlcNAc...) asparagine). A helical membrane pass occupies residues 31–55; the sequence is FPITMMVTGFVGNALAMLLVVRSYR. The Cytoplasmic segment spans residues 56–68; it reads RRESKRKKSFLLC. Residues 69 to 89 traverse the membrane as a helical segment; that stretch reads IGWLALTDLVGQLLTSPVVIL. Topologically, residues 90 to 108 are extracellular; that stretch reads VYLSQRRWEQLDPSGRLCT. A disulfide bond links Cys107 and Cys184. A helical transmembrane segment spans residues 109-130; the sequence is FFGLTMTVFGLSSLLVASAMAV. The Cytoplasmic segment spans residues 131-151; it reads ERALAIRAPHWYASHMKTRAT. A helical transmembrane segment spans residues 152 to 173; the sequence is PVLLGVWLSVLAFALLPVLGVG. Topologically, residues 174–203 are extracellular; that stretch reads RYSVQWPGTWCFISTGPAGNETDSAREPGS. N-linked (GlcNAc...) asparagine glycosylation is present at Asn193. The helical transmembrane segment at 204-229 threads the bilayer; it reads VAFASAFACLGLLALVVTFACNLATI. The Cytoplasmic portion of the chain corresponds to 230–259; the sequence is KALVSRCRAKAAASQSSAQWGRITTETAIQ. The helical transmembrane segment at 260-283 threads the bilayer; that stretch reads LMGIMCVLSVCWSPLLIMMLKMIF. Over 284 to 303 the chain is Extracellular; that stretch reads NQMSVEQCKTQMGKEKECNS. A helical transmembrane segment spans residues 304-325; the sequence is FLIAVRLASLNQILDPWVYLLL. The Cytoplasmic portion of the chain corresponds to 326–365; the sequence is RKILLRKFCQIRDHTNYASSSTSLPCPGSSVLMWSDQLER.

This sequence belongs to the G-protein coupled receptor 1 family. As to quaternary structure, interacts (via C-terminus) with MKLN1. Does not interact with MKLN1. Principally expressed in the tubules of the renal medulla. Specific expression is seen in medullary and cortical thick ascending limbs; lower levels are detected in cortical and inner medullary collecting ducts. Not detected significantly in the glomeruli. In the brain, expressed in all types of glial cells.

The protein localises to the cell membrane. Its function is as follows. Receptor for prostaglandin E2 (PGE2). Required for normal development of fever in response to pyrinogens, including IL1B, prostaglandin E2 and bacterial lipopolysaccharide (LPS). Required for normal potentiation of platelet aggregation by prostaglandin E2, and thus plays a role in the regulation of blood coagulation. Required for increased HCO3(-) secretion in the duodenum in response to mucosal acidification, and thereby contributes to the protection of the mucosa against acid-induced ulceration. Not required for normal kidney function, normal urine volume and osmolality. In terms of biological role, receptor for prostaglandin E2 (PGE2); ligand binding activates a signaling cascade via G(i) proteins that leads to the inhibition of adenylate cyclase. Receptor for prostaglandin E2 (PGE2); ligand binding can activate several distinct signaling cascades, resulting in activation or inhibition of adenylate cyclase. This is Prostaglandin E2 receptor EP3 subtype (Ptger3) from Rattus norvegicus (Rat).